A 398-amino-acid polypeptide reads, in one-letter code: Elongation factor Tu (398 aa).

The tr-type G domain maps to 10 to 207; that stretch reads KPHVNIGTIG…TVDEYIPEPE (198 aa). The tract at residues 19–26 is G1; that stretch reads GHVDHGKT. GTP is bound at residue 19 to 26; it reads GHVDHGKT. Thr26 provides a ligand contact to Mg(2+). The G2 stretch occupies residues 63 to 67; it reads GITIN. The tract at residues 84–87 is G3; the sequence is DAPG. GTP-binding positions include 84-88 and 139-142; these read DAPGH and NKVD. The segment at 139–142 is G4; that stretch reads NKVD. Residues 177-179 form a G5 region; sequence SAL.

The protein belongs to the TRAFAC class translation factor GTPase superfamily. Classic translation factor GTPase family. EF-Tu/EF-1A subfamily. Monomer.

It localises to the cytoplasm. It carries out the reaction GTP + H2O = GDP + phosphate + H(+). Its function is as follows. GTP hydrolase that promotes the GTP-dependent binding of aminoacyl-tRNA to the A-site of ribosomes during protein biosynthesis. The sequence is that of Elongation factor Tu from Streptococcus thermophilus (strain CNRZ 1066).